A 971-amino-acid polypeptide reads, in one-letter code: Exportin-2 (971 aa).

One can recognise an Importin N-terminal domain in the interval 29–102 (AEKFLESVEG…KANIVNLMLS (74 aa)).

Belongs to the XPO2/CSE1 family. As to quaternary structure, interacts with cftr.

Its subcellular location is the cytoplasm. It localises to the nucleus. Export receptor for importin alpha. Mediates importin-alpha re-export from the nucleus to the cytoplasm after import substrates have been released into the nucleoplasm. Negatively regulates fluid secretion and plays a role in fluid homeostasis by down-regulating cftr activity. The protein is Exportin-2 (cse1l) of Pagrus major (Red sea bream).